The sequence spans 148 residues: Small ribosomal subunit protein uS12 (148 aa).

The protein belongs to the universal ribosomal protein uS12 family. Part of the 30S ribosomal subunit.

Functionally, with S4 and S5 plays an important role in translational accuracy. Located at the interface of the 30S and 50S subunits. The polypeptide is Small ribosomal subunit protein uS12 (Methanocaldococcus jannaschii (strain ATCC 43067 / DSM 2661 / JAL-1 / JCM 10045 / NBRC 100440) (Methanococcus jannaschii)).